A 173-amino-acid polypeptide reads, in one-letter code: Ribosome maturation factor RimM (173 aa).

The region spanning 95 to 169 is the PRC barrel domain; it reads EGSYYFKDIL…RIEVTLLEGL (75 aa).

This sequence belongs to the RimM family. As to quaternary structure, binds ribosomal protein uS19.

The protein resides in the cytoplasm. Its function is as follows. An accessory protein needed during the final step in the assembly of 30S ribosomal subunit, possibly for assembly of the head region. Essential for efficient processing of 16S rRNA. May be needed both before and after RbfA during the maturation of 16S rRNA. It has affinity for free ribosomal 30S subunits but not for 70S ribosomes. The protein is Ribosome maturation factor RimM of Lactobacillus johnsonii (strain CNCM I-12250 / La1 / NCC 533).